The following is a 974-amino-acid chain: Kinase-interacting protein 1 (974 aa).

The NAB domain occupies 10–90 (YSWWAASHIR…ERYDHLSKEL (81 aa)). A disordered region spans residues 151–170 (STASKQKQGKQSSKIEDAAK). The stretch at 173–423 (LSKNEAIEEI…DVVNQNSCLR (251 aa)) forms a coiled coil. The interval 586-614 (AQPTPAEKGDEKVSAQSGNTSVYETHTQK) is disordered. The segment covering 599 to 610 (SAQSGNTSVYET) has biased composition (polar residues). A coiled-coil region spans residues 641–697 (NEYTAILKNYKEVTKKLSDIEKKDRDTEFELTLQTRELKSAIAKRDEEIHNLRQKLS). The tract at residues 714 to 740 (LLDPSDPSSARGLKPEDLPQIKDGDDE) is disordered. The span at 726–736 (LKPEDLPQIKD) shows a compositional bias: basic and acidic residues. Coiled-coil stretches lie at residues 784–807 (HQIQKFKTTVHDLQNEISKARDKE) and 882–905 (AAKFQGEVLNMKHENKKVREELEA).

As to quaternary structure, homodimer or homooligomer. Interacts with PRK1. Post-translationally, phosphorylated by PRK1. In terms of tissue distribution, expressed in mature pollen grains and pollen tubes, but not in style, ovary, petal, leaf, root or sepal.

The protein resides in the cytoplasm. Its function is as follows. Probably involved in the receptor-like kinase-mediated signal transduction pathway. The chain is Kinase-interacting protein 1 from Petunia integrifolia (Violet-flowered petunia).